Here is a 212-residue protein sequence, read N- to C-terminus: Pyrrolidone-carboxylate peptidase (212 aa).

Residues Glu78, Cys141, and His165 contribute to the active site.

Belongs to the peptidase C15 family. Homotetramer.

The protein resides in the cytoplasm. It carries out the reaction Release of an N-terminal pyroglutamyl group from a polypeptide, the second amino acid generally not being Pro.. Functionally, removes 5-oxoproline from various penultimate amino acid residues except L-proline. This Staphylococcus haemolyticus (strain JCSC1435) protein is Pyrrolidone-carboxylate peptidase.